Reading from the N-terminus, the 621-residue chain is UvrABC system protein C (621 aa).

The GIY-YIG domain maps to 20-98 (MAPGVYCMYA…IKSLAPRYNV (79 aa)). A UVR domain is found at 207-242 (DLLAEELIQAMQVASEHLEFEQAARLRDLLTSLRSM).

This sequence belongs to the UvrC family. In terms of assembly, interacts with UvrB in an incision complex.

The protein resides in the cytoplasm. Functionally, the UvrABC repair system catalyzes the recognition and processing of DNA lesions. UvrC both incises the 5' and 3' sides of the lesion. The N-terminal half is responsible for the 3' incision and the C-terminal half is responsible for the 5' incision. In Xylella fastidiosa (strain 9a5c), this protein is UvrABC system protein C.